The primary structure comprises 168 residues: Desumoylating isopeptidase 1 (168 aa).

One can recognise a PPPDE domain in the interval 7–149 (YPVKLYVYDL…FGQALRPLLD (143 aa)). His38 is a catalytic residue. A Nuclear export signal 1 motif is present at residues 83–91 (IFLEYLSSL). The active site involves Cys108. The Nuclear export signal 2 motif lies at 139–153 (PFGQALRPLLDSIQI).

It belongs to the DeSI family. As to quaternary structure, homodimer. Interacts with UBQLN4; leading to the export of UBQLN4 from the nucleus.

It localises to the cytoplasm. Its subcellular location is the nucleus. It carries out the reaction S-hexadecanoyl-L-cysteinyl-[protein] + H2O = L-cysteinyl-[protein] + hexadecanoate + H(+). With respect to regulation, palmostatin B inhibits its palmitoyl protein thioesterase activity. Protease which deconjugates SUMO1, SUMO2 and SUMO3 from some substrate proteins. Has isopeptidase but not SUMO-processing activity. Desumoylates ZBTB46. Collaborates with UBQLN4 in the export of ubiquitinated proteins from the nucleus to the cytoplasm. Exhibits palmitoyl protein thioesterase (S-depalmitoylation) activity towards synthetic substrates 4-methylumbelliferyl-6-S-palmitoyl-beta-D-glucopyranoside and S-depalmitoylation probe 5 (DPP-5). This chain is Desumoylating isopeptidase 1, found in Homo sapiens (Human).